The chain runs to 443 residues: Phosphomevalonate kinase ERG8 (443 aa).

160–170 contributes to the ATP binding site; sequence ANKTGLGSSAA.

Belongs to the GHMP kinase family. Mevalonate kinase subfamily.

The enzyme catalyses (R)-5-phosphomevalonate + ATP = (R)-5-diphosphomevalonate + ADP. It participates in isoprenoid biosynthesis; isopentenyl diphosphate biosynthesis via mevalonate pathway; isopentenyl diphosphate from (R)-mevalonate: step 2/3. Phosphomevalonate kinase; part of the second module of ergosterol biosynthesis pathway that includes the middle steps of the pathway. ERG8 converts 5-phosphomevalonate to 5-diphosphomevalonate. The second module is carried out in the vacuole and involves the formation of farnesyl diphosphate, which is also an important intermediate in the biosynthesis of ubiquinone, dolichol, heme and prenylated proteins. Activity by the mevalonate kinase ERG12 (FG05912) first converts mevalonate into 5-phosphomevalonate. 5-phosphomevalonate is then further converted to 5-diphosphomevalonate by the phosphomevalonate kinase ERG8 (FG09764). The diphosphomevalonate decarboxylase ERG19 (FG10424) then produces isopentenyl diphosphate. The isopentenyl-diphosphate delta-isomerase IDI1 (FG09722) then catalyzes the 1,3-allylic rearrangement of the homoallylic substrate isopentenyl (IPP) to its highly electrophilic allylic isomer, dimethylallyl diphosphate (DMAPP). Finally the farnesyl diphosphate synthase ERG20 (FG06784) catalyzes the sequential condensation of isopentenyl pyrophosphate with dimethylallyl pyrophosphate, and then with the resultant geranylpyrophosphate to the ultimate product farnesyl pyrophosphate. This Gibberella zeae (strain ATCC MYA-4620 / CBS 123657 / FGSC 9075 / NRRL 31084 / PH-1) (Wheat head blight fungus) protein is Phosphomevalonate kinase ERG8.